The sequence spans 151 residues: 18 kDa heat shock protein (151 aa).

A sHSP domain is found at 38 to 151; sequence TFNGNAGFKV…KDNGRRIDIH (114 aa).

It belongs to the small heat shock protein (HSP20) family.

Probable chaperone. The sequence is that of 18 kDa heat shock protein (hsp18) from Clostridium acetobutylicum (strain ATCC 824 / DSM 792 / JCM 1419 / IAM 19013 / LMG 5710 / NBRC 13948 / NRRL B-527 / VKM B-1787 / 2291 / W).